The following is a 175-amino-acid chain: Orotate phosphoribosyltransferase (175 aa).

5-phospho-alpha-D-ribose 1-diphosphate-binding positions include arginine 88, lysine 89, lysine 92, and 114–122 (EDVVTTARG). Threonine 118 and arginine 146 together coordinate orotate.

The protein belongs to the purine/pyrimidine phosphoribosyltransferase family. PyrE subfamily. As to quaternary structure, homodimer. Mg(2+) is required as a cofactor.

The catalysed reaction is orotidine 5'-phosphate + diphosphate = orotate + 5-phospho-alpha-D-ribose 1-diphosphate. The protein operates within pyrimidine metabolism; UMP biosynthesis via de novo pathway; UMP from orotate: step 1/2. Functionally, catalyzes the transfer of a ribosyl phosphate group from 5-phosphoribose 1-diphosphate to orotate, leading to the formation of orotidine monophosphate (OMP). This Methanocella arvoryzae (strain DSM 22066 / NBRC 105507 / MRE50) protein is Orotate phosphoribosyltransferase.